Reading from the N-terminus, the 522-residue chain is Probable protein kinase UbiB (522 aa).

In terms of domain architecture, Protein kinase spans 119–497 (SFERVPVASA…QRRTNRLLQS (379 aa)). ATP is bound by residues 125-133 (VASASIAQV) and Lys-151. The active-site Proton acceptor is Asp-286. A helical membrane pass occupies residues 496 to 516 (QSIIYGGMGFVLGLLALQFLI).

It belongs to the ABC1 family. UbiB subfamily.

It localises to the cell inner membrane. It functions in the pathway cofactor biosynthesis; ubiquinone biosynthesis [regulation]. Its function is as follows. Is probably a protein kinase regulator of UbiI activity which is involved in aerobic coenzyme Q (ubiquinone) biosynthesis. In Paracidovorax citrulli (strain AAC00-1) (Acidovorax citrulli), this protein is Probable protein kinase UbiB.